Consider the following 1022-residue polypeptide: Dihydropyrimidine dehydrogenase [NADP(+)] (1022 aa).

The interval 26–45 (ANVHSTASKKNEKKHWKRNP) is disordered. Residues 69 to 100 (ERGALREALRCLKCADAPCQKSCPTNLDIKSF) form the 4Fe-4S ferredoxin-type 1 domain. 4 residues coordinate [4Fe-4S] cluster: cysteine 79, cysteine 82, cysteine 87, and cysteine 91. Valine 129 lines the FAD pocket. Residues cysteine 130, cysteine 136, cysteine 140, and glutamine 156 each coordinate [4Fe-4S] cluster. FAD-binding positions include 194–198 (GCGPA), 218–226 (EKQKYIGGL), arginine 235, and leucine 261. NADP(+) contacts are provided by residues 340-343 (AGDT), 364-365 (RK), arginine 371, 437-439 (AFG), and 481-487 (DIAGFAN). 480 to 489 (GDIAGFANTT) serves as a coordination point for FAD. FMN contacts are provided by residues serine 550 and 574 to 575 (KT). Substrate is bound by residues asparagine 609 and 668 to 670 (NLS). The active-site Proton acceptor is cysteine 671. Lysine 709 lines the FMN pocket. 736 to 737 (NT) contributes to the substrate binding site. Residues glycine 767, 793–795 (TGG), and 816–817 (CS) contribute to the FMN site. 4Fe-4S ferredoxin-type domains follow at residues 943 to 975 (VQAL…FDPE) and 976 to 1006 (THLP…MVSR). Positions 952, 955, 958, 962, 985, 988, 991, and 995 each coordinate [4Fe-4S] cluster.

Belongs to the dihydropyrimidine dehydrogenase family. In terms of assembly, homodimer. Requires FAD as cofactor. FMN serves as cofactor. The cofactor is [4Fe-4S] cluster.

The protein localises to the cytoplasm. It carries out the reaction 5,6-dihydrouracil + NADP(+) = uracil + NADPH + H(+). It catalyses the reaction 5,6-dihydrothymine + NADP(+) = thymine + NADPH + H(+). It functions in the pathway amino-acid biosynthesis; beta-alanine biosynthesis. In terms of biological role, involved in pyrimidine base degradation. Catalyzes the reduction of uracil and thymine. Also involved the degradation of the chemotherapeutic drug 5-fluorouracil. This chain is Dihydropyrimidine dehydrogenase [NADP(+)] (dpyd), found in Danio rerio (Zebrafish).